A 200-amino-acid polypeptide reads, in one-letter code: Cytochrome c biogenesis ATP-binding export protein CcmA (200 aa).

The ABC transporter domain occupies 2–200; the sequence is LDVIELDFDY…NKADYEEYHL (199 aa). Residue 34–41 coordinates ATP; sequence GSNGAGKT.

The protein belongs to the ABC transporter superfamily. CcmA exporter (TC 3.A.1.107) family. The complex is composed of two ATP-binding proteins (CcmA) and two transmembrane proteins (CcmB).

Its subcellular location is the cell inner membrane. It carries out the reaction heme b(in) + ATP + H2O = heme b(out) + ADP + phosphate + H(+). Functionally, part of the ABC transporter complex CcmAB involved in the biogenesis of c-type cytochromes; once thought to export heme, this seems not to be the case, but its exact role is uncertain. Responsible for energy coupling to the transport system. The sequence is that of Cytochrome c biogenesis ATP-binding export protein CcmA from Legionella pneumophila.